A 477-amino-acid chain; its full sequence is MARTLAEKVWDDHVVRKGQDGEPDLLYIDLHLVHEVTSPQAFDGLRAAGRPVRRLDLTIATEDHNTPTVDIDRPLSLLEDKTSAKQLQTLRENCAEFGVRLHPLGDAEQGIVHVVGPQLGLTQPGMTVVCGDSHTSTHGAFGSLGMGIGTSEVEHVLATQTLPLKPFKTMAITVDGTLKPGTTAKDVILAVIAEIGTGGGQGYVLEYRGEAIRNLSMEGRMTICNMSIEAGARAGMVAPDETTFAYLEGRPHAPQGADWDAAVEYWRTLRTDDDAEFDAEVVLDGSALEPFVTWGTNPGQGVPLSGSVPEPERIGDDGVRQGVERALEYMGLEGGTPMRDIAVDTVFIGSCTNSRIEDLRAAADVVRGRRKADSVRVMVVPGSAKVRLQAEAEGIDTVFKEFGADWRFAGCSMCLGMNPDQLAPGERCASTSNRNFEGRQGKGGRTHLVSPLVAAATAVRGTLSSPADLEPPVPTNV.

[4Fe-4S] cluster is bound by residues Cys351, Cys411, and Cys414.

Belongs to the aconitase/IPM isomerase family. LeuC type 1 subfamily. As to quaternary structure, heterodimer of LeuC and LeuD. Requires [4Fe-4S] cluster as cofactor.

The catalysed reaction is (2R,3S)-3-isopropylmalate = (2S)-2-isopropylmalate. It functions in the pathway amino-acid biosynthesis; L-leucine biosynthesis; L-leucine from 3-methyl-2-oxobutanoate: step 2/4. Functionally, catalyzes the isomerization between 2-isopropylmalate and 3-isopropylmalate, via the formation of 2-isopropylmaleate. The protein is 3-isopropylmalate dehydratase large subunit of Kineococcus radiotolerans (strain ATCC BAA-149 / DSM 14245 / SRS30216).